The chain runs to 156 residues: Cyanate hydratase (156 aa).

Catalysis depends on residues R96, E99, and S122.

Belongs to the cyanase family.

The catalysed reaction is cyanate + hydrogencarbonate + 3 H(+) = NH4(+) + 2 CO2. Catalyzes the reaction of cyanate with bicarbonate to produce ammonia and carbon dioxide. This chain is Cyanate hydratase, found in Burkholderia ambifaria (strain MC40-6).